The following is a 479-amino-acid chain: Anaerobic nitric oxide reductase flavorubredoxin (479 aa).

Positions 30–210 (LRGSSYNSYL…PFSRLVTPKI (181 aa)) are zinc metallo-hydrolase. Fe cation contacts are provided by His-79, Glu-81, Asp-83, His-147, Asp-166, and His-227. The Flavodoxin-like domain occupies 254-393 (ITIFYDTMSN…LCREHGREIA (140 aa)). Residues 260–264 (TMSNN) and 342–369 (AFGS…EMSL) contribute to the FMN site. Positions 423-474 (GPRMQCSVCQWIYDPAKGEPMQDVAPGTPWSEVPDNFLCPECSLGKDVFDEL) constitute a Rubredoxin-like domain. Fe cation-binding residues include Cys-428, Cys-431, Cys-461, and Cys-464.

In the N-terminal section; belongs to the zinc metallo-hydrolase group 3 family. In terms of assembly, homotetramer. Fe cation serves as cofactor. It depends on FMN as a cofactor.

It is found in the cytoplasm. It functions in the pathway nitrogen metabolism; nitric oxide reduction. Functionally, anaerobic nitric oxide reductase; uses NADH to detoxify nitric oxide (NO), protecting several 4Fe-4S NO-sensitive enzymes. Has at least 2 reductase partners, only one of which (NorW, flavorubredoxin reductase) has been identified. NO probably binds to the di-iron center; electrons enter from the NorW at rubredoxin and are transferred sequentially to the FMN center and the di-iron center. Also able to function as an aerobic oxygen reductase. In Shigella flexneri serotype 5b (strain 8401), this protein is Anaerobic nitric oxide reductase flavorubredoxin.